The following is a 588-amino-acid chain: Aspartate--tRNA ligase (588 aa).

Residue glutamate 177 participates in L-aspartate binding. The tract at residues 201–204 (QLFK) is aspartate. An L-aspartate-binding site is contributed by arginine 223. Residues 223-225 (RDE) and glutamine 232 each bind ATP. Residue histidine 451 participates in L-aspartate binding. Residue glutamate 485 participates in ATP binding. Arginine 492 serves as a coordination point for L-aspartate. 537–540 (GLDR) contacts ATP.

The protein belongs to the class-II aminoacyl-tRNA synthetase family. Type 1 subfamily. As to quaternary structure, homodimer.

Its subcellular location is the cytoplasm. The enzyme catalyses tRNA(Asp) + L-aspartate + ATP = L-aspartyl-tRNA(Asp) + AMP + diphosphate. Its function is as follows. Catalyzes the attachment of L-aspartate to tRNA(Asp) in a two-step reaction: L-aspartate is first activated by ATP to form Asp-AMP and then transferred to the acceptor end of tRNA(Asp). This is Aspartate--tRNA ligase from Staphylococcus carnosus (strain TM300).